Consider the following 417-residue polypeptide: Cytochrome b-c1 complex subunit 2, mitochondrial (417 aa).

Residues 1–22 (MTRGVPRLAVAARHFSTAEAAG) constitute a mitochondrion transit peptide.

The protein belongs to the peptidase M16 family. UQCRC2/QCR2 subfamily. In terms of assembly, component of the ubiquinol-cytochrome c oxidoreductase (cytochrome b-c1 complex, complex III, CIII), a multisubunit enzyme composed of 3 respiratory subunits cytochrome b, cytochrome c1 and Rieske protein, 2 core protein subunits, and additional low-molecular weight protein subunits. The complex exists as an obligatory dimer and forms supercomplexes (SCs) in the inner mitochondrial membrane with cytochrome c oxidase (complex IV, CIV).

Its subcellular location is the mitochondrion inner membrane. Component of the ubiquinol-cytochrome c oxidoreductase, a multisubunit transmembrane complex that is part of the mitochondrial electron transport chain which drives oxidative phosphorylation. The respiratory chain contains 3 multisubunit complexes succinate dehydrogenase (complex II, CII), ubiquinol-cytochrome c oxidoreductase (cytochrome b-c1 complex, complex III, CIII) and cytochrome c oxidase (complex IV, CIV), that cooperate to transfer electrons derived from NADH and succinate to molecular oxygen, creating an electrochemical gradient over the inner membrane that drives transmembrane transport and the ATP synthase. The cytochrome b-c1 complex catalyzes electron transfer from ubiquinol to cytochrome c, linking this redox reaction to translocation of protons across the mitochondrial inner membrane, with protons being carried across the membrane as hydrogens on the quinol. In the process called Q cycle, 2 protons are consumed from the matrix, 4 protons are released into the intermembrane space and 2 electrons are passed to cytochrome c. The sequence is that of Cytochrome b-c1 complex subunit 2, mitochondrial (QCR2) from Yarrowia lipolytica (strain CLIB 122 / E 150) (Yeast).